The following is a 165-amino-acid chain: Protein SprT (165 aa).

Residues 10 to 158 (EACYRQAEHF…CRRCKATLVF (149 aa)) enclose the SprT-like domain. Position 69 (histidine 69) interacts with Zn(2+). Glutamate 70 is an active-site residue. Histidine 73 contacts Zn(2+).

Belongs to the SprT family. Zn(2+) serves as cofactor.

The protein resides in the cytoplasm. The chain is Protein SprT from Pseudomonas aeruginosa (strain UCBPP-PA14).